Consider the following 793-residue polypeptide: Toll-like receptor 2 type-1 (793 aa).

The first 25 residues, 1-25, serve as a signal peptide directing secretion; it reads MFNQSKQKPTMKLMWQAWLIYTALA. The Extracellular portion of the chain corresponds to 26 to 597; it reads AHLPEEQALR…QLSLMECHRS (572 aa). C41 and C47 form a disulfide bridge. N48 carries an N-linked (GlcNAc...) asparagine glycan. LRR repeat units lie at residues 64–85, 88–109, 112–133, 136–157, 161–182, and 185–206; these read KITVLNLAHNRIKLIRTHDLQK, NLRTLLLQSNQISSIDEDSFGS, KLELLDLSNNSLAHLSPVWFGP, SLQHLRIQGNSYSDLGESSPFS, NLSSLHLGNPQFSIIRQGNFEG, and FLNTLRIDGDNLSQYEPGSLKS. N-linked (GlcNAc...) asparagine glycosylation is present at N120. 4 N-linked (GlcNAc...) asparagine glycosylation sites follow: N161, N195, N254, and N325. C362 and C391 form a disulfide bridge. LRR repeat units follow at residues 370-391, 397-418, 423-444, 446-467, 468-486, 487-508, and 509-530; these read SLLYLDFHDNLLVNNRLGETIC, SLQTLNLSKNSLKSLKQAARYI, KLINLDISENNFGEIPDMCEWP, NLKYLNLSSTQIPKLTTCIPST, LEVLDVSANNLQDFGLQLP, FLKELYLTKNHLKTLPEATDIP, and NLVAMSISRNKLNSFSKEEFES. N-linked (GlcNAc...) asparagine glycosylation is present at N402. Cysteines 441 and 463 form a disulfide. An N-linked (GlcNAc...) asparagine glycan is attached at N451. The 55-residue stretch at 542-596 folds into the LRRCT domain; that stretch reads NNFICSCEFLSFIHHEAGIAQVLVGWPESYICDSPLTVRGAQVGSVQLSLMECHR. The helical transmembrane segment at 598-618 threads the bilayer; that stretch reads LLVSLICTLVFLFILILVVVG. Over 619–793 the chain is Cytoplasmic; that stretch reads YKYHAVWYMR…WENLKAALKS (175 aa). One can recognise a TIR domain in the interval 648–791; that stretch reads ICYDAFVSYS…MFWENLKAAL (144 aa).

It belongs to the Toll-like receptor family. In terms of assembly, binds MYD88 (via TIR domain). In terms of processing, N-glycosylated. TLR2-1 is more heavily glycosylated than TLR2-2. In terms of tissue distribution, highly expressed in ovary. Detected at lower levels in heart, lung, gizzard and testis.

The protein localises to the membrane. In terms of biological role, participates in the innate immune response to microbial agents. Acts via MYD88 and TRAF6, leading to NF-kappa-B activation, cytokine secretion and the inflammatory response. Does not respond to LPS and responds with less ability than TLR2-2 to mycoplasmal macrophage-activating lipopeptide-2kD (MALP-2). The polypeptide is Toll-like receptor 2 type-1 (TLR2-1) (Gallus gallus (Chicken)).